A 2193-amino-acid polypeptide reads, in one-letter code: Genome polyprotein (2193 aa).

Gly2 carries N-myristoyl glycine; by host lipidation. At 2–1503 (GAQVSTQKTG…HVSRAFICLQ (1502 aa)) the chain is on the cytoplasmic side. An amphipathic alpha-helix region spans residues 567-583 (ELQSDVREAVEGAIGRV). Catalysis depends on for protease 2A activity residues His880 and Asp898. Zn(2+) contacts are provided by Cys915 and Cys917. Cys969 (for protease 2A activity) is an active-site residue. 2 residues coordinate Zn(2+): Cys975 and His977. Residues 1109–1181 (NNRWLKKFTE…EQSAPSQGDQ (73 aa)) form a membrane-binding region. Residues 1109–1247 (NNRWLKKFTE…SPGAGKSVAT (139 aa)) are oligomerization. The segment at 1130-1134 (AIKIQ) is RNA-binding. Residues 1213–1369 (EKKMSNYIQF…SMYSQNGKIN (157 aa)) form the SF3 helicase domain. Cys1377, Cys1389, and Cys1394 together coordinate Zn(2+). Residues 1377-1394 (CDEECCPVNFKKCCPLVC) form a C4-type; degenerate zinc finger. The tract at residues 1421–1428 (EYNHRHSV) is RNA-binding. The interval 1432–1437 (LEALFQ) is oligomerization. The stretch at 1504–1519 (ALTTFVSVAGIIYIIY) is an intramembrane region. The Cytoplasmic portion of the chain corresponds to 1520–2193 (KLFAGFQGAY…TLRRKWLDSF (674 aa)). O-(5'-phospho-RNA)-tyrosine is present on Tyr1529. Residues 1549 to 1727 (GPAFEFAVAM…FSAALLKHYF (179 aa)) enclose the Peptidase C3 domain. Catalysis depends on for protease 3C activity residues His1588, Glu1619, and Cys1695. The RdRp catalytic domain occupies 1958–2074 (GHLIAFDYSG…SYPWPIDASL (117 aa)). Asp1964 and Asp2060 together coordinate Mg(2+).

It belongs to the picornaviruses polyprotein family. In terms of assembly, interacts with capsid protein VP1 and capsid protein VP3 to form heterotrimeric protomers. Interacts with capsid protein VP0, and capsid protein VP3 to form heterotrimeric protomers. Five protomers subsequently associate to form pentamers which serve as building blocks for the capsid. Interacts with capsid protein VP2, capsid protein VP3 and capsid protein VP4 following cleavage of capsid protein VP0. As to quaternary structure, interacts with capsid protein VP1 and capsid protein VP3 in the mature capsid. In terms of assembly, interacts with capsid protein VP0 and capsid protein VP1 to form heterotrimeric protomers. Five protomers subsequently associate to form pentamers which serve as building blocks for the capsid. Interacts with capsid protein VP4 in the mature capsid. Interacts with protein 2C; this interaction may be important for virion morphogenesis. Interacts with capsid protein VP1 and capsid protein VP3. As to quaternary structure, homodimer. In terms of assembly, homohexamer; forms a hexameric ring structure with 6-fold symmetry characteristic of AAA+ ATPases. Interacts (via N-terminus) with host RTN3 (via reticulon domain); this interaction is important for viral replication. Interacts with capsid protein VP3; this interaction may be important for virion morphogenesis. Interacts with protein 3CD. As to quaternary structure, homodimer. Interacts with host GBF1. Interacts (via GOLD domain) with host ACBD3 (via GOLD domain); this interaction allows the formation of a viral protein 3A/ACBD3 heterotetramer with a 2:2 stoichiometry, which will stimulate the recruitment of host PI4KB in order to synthesize PI4P at the viral RNA replication sites. In terms of assembly, interacts with RNA-directed RNA polymerase. Interacts with protein 3AB and with RNA-directed RNA polymerase. As to quaternary structure, interacts with Viral protein genome-linked and with protein 3CD. Mg(2+) serves as cofactor. Post-translationally, specific enzymatic cleavages in vivo by the viral proteases yield processing intermediates and the mature proteins. Myristoylation is required for the formation of pentamers during virus assembly. Further assembly of 12 pentamers and a molecule of genomic RNA generates the provirion. In terms of processing, during virion maturation, immature virions are rendered infectious following cleavage of VP0 into VP4 and VP2. This maturation seems to be an autocatalytic event triggered by the presence of RNA in the capsid and it is followed by a conformational change infectious virion. Post-translationally, myristoylation is required during RNA encapsidation and formation of the mature virus particle. VPg is uridylylated by the polymerase into VPg-pUpU. This acts as a nucleotide-peptide primer for the genomic RNA replication.

The protein resides in the virion. It is found in the host cytoplasm. Its subcellular location is the host cytoplasmic vesicle membrane. It localises to the host nucleus. The catalysed reaction is a ribonucleoside 5'-triphosphate + H2O = a ribonucleoside 5'-diphosphate + phosphate + H(+). The enzyme catalyses Selective cleavage of Tyr-|-Gly bond in the picornavirus polyprotein.. It catalyses the reaction RNA(n) + a ribonucleoside 5'-triphosphate = RNA(n+1) + diphosphate. It carries out the reaction Selective cleavage of Gln-|-Gly bond in the poliovirus polyprotein. In other picornavirus reactions Glu may be substituted for Gln, and Ser or Thr for Gly.. Its activity is regulated as follows. Replication or transcription is subject to high level of random mutations by the nucleotide analog ribavirin. Forms an icosahedral capsid of pseudo T=3 symmetry with capsid proteins VP2 and VP3. The capsid is 300 Angstroms in diameter, composed of 60 copies of each capsid protein and enclosing the viral positive strand RNA genome. Capsid protein VP1 mainly forms the vertices of the capsid. Capsid protein VP1 interacts with host cell receptor to provide virion attachment to target host cells. This attachment induces virion internalization. Tyrosine kinases are probably involved in the entry process. After binding to its receptor, the capsid undergoes conformational changes. Capsid protein VP1 N-terminus (that contains an amphipathic alpha-helix) and capsid protein VP4 are externalized. Together, they shape a pore in the host membrane through which viral genome is translocated to host cell cytoplasm. Its function is as follows. Forms an icosahedral capsid of pseudo T=3 symmetry with capsid proteins VP2 and VP3. The capsid is 300 Angstroms in diameter, composed of 60 copies of each capsid protein and enclosing the viral positive strand RNA genome. In terms of biological role, lies on the inner surface of the capsid shell. After binding to the host receptor, the capsid undergoes conformational changes. Capsid protein VP4 is released, Capsid protein VP1 N-terminus is externalized, and together, they shape a pore in the host membrane through which the viral genome is translocated into the host cell cytoplasm. Functionally, component of immature procapsids, which is cleaved into capsid proteins VP4 and VP2 after maturation. Allows the capsid to remain inactive before the maturation step. Cysteine protease that cleaves viral polyprotein and specific host proteins. It is responsible for the autocatalytic cleavage between the P1 and P2 regions, which is the first cleavage occurring in the polyprotein. Also cleaves the host translation initiation factor EIF4G1, in order to shut down the capped cellular mRNA translation. Inhibits the host nucleus-cytoplasm protein and RNA trafficking by cleaving host members of the nuclear pores. Counteracts stress granule formation probably by antagonizing its assembly or promoting its dissassembly. Its function is as follows. Plays an essential role in the virus replication cycle by acting as a viroporin. Creates a pore in the host endoplasmic reticulum and as a consequence releases Ca2+ in the cytoplasm of infected cell. In turn, high levels of cytoplasmic calcium may trigger membrane trafficking and transport of viral ER-associated proteins to viroplasms, sites of viral genome replication. In terms of biological role, induces and associates with structural rearrangements of intracellular membranes. Displays RNA-binding, nucleotide binding and NTPase activities. May play a role in virion morphogenesis and viral RNA encapsidation by interacting with the capsid protein VP3. Functionally, localizes the viral replication complex to the surface of membranous vesicles. Together with protein 3CD binds the Cis-Active RNA Element (CRE) which is involved in RNA synthesis initiation. Acts as a cofactor to stimulate the activity of 3D polymerase, maybe through a nucleid acid chaperone activity. Localizes the viral replication complex to the surface of membranous vesicles. It inhibits host cell endoplasmic reticulum-to-Golgi apparatus transport and causes the disassembly of the Golgi complex, possibly through GBF1 interaction. This would result in depletion of MHC, trail receptors and IFN receptors at the host cell surface. Plays an essential role in viral RNA replication by recruiting ACBD3 and PI4KB at the viral replication sites, thereby allowing the formation of the rearranged membranous structures where viral replication takes place. Its function is as follows. Acts as a primer for viral RNA replication and remains covalently bound to viral genomic RNA. VPg is uridylylated prior to priming replication into VPg-pUpU. The oriI viral genomic sequence may act as a template for this. The VPg-pUpU is then used as primer on the genomic RNA poly(A) by the RNA-dependent RNA polymerase to replicate the viral genome. During genome replication, the VPg-RNA linkage is removed by the host TDP2, thereby accelerating replication. During the late stage of the replication cycle, host TDP2 is excluded from sites of viral RNA synthesis and encapsidation, allowing for the generation of progeny virions. In terms of biological role, involved in the viral replication complex and viral polypeptide maturation. It exhibits protease activity with a specificity and catalytic efficiency that is different from protease 3C. Protein 3CD lacks polymerase activity. Protein 3CD binds to the 5'UTR of the viral genome. Functionally, replicates the viral genomic RNA on the surface of intracellular membranes. May form linear arrays of subunits that propagate along a strong head-to-tail interaction called interface-I. Covalently attaches UMP to a tyrosine of VPg, which is used to prime RNA synthesis. The positive stranded RNA genome is first replicated at virus induced membranous vesicles, creating a dsRNA genomic replication form. This dsRNA is then used as template to synthesize positive stranded RNA genomes. ss(+)RNA genomes are either translated, replicated or encapsidated. Major viral protease that mediates proteolytic processing of the polyprotein. Cleaves host EIF5B, contributing to host translation shutoff. Also cleaves host PABPC1, contributing to host translation shutoff. Cleaves host NLRP1, triggers host N-glycine-mediated degradation of the autoinhibitory NLRP1 N-terminal fragment. This is Genome polyprotein from Echovirus 9 (strain Hill).